The sequence spans 84 residues: Small ribosomal subunit protein bS18 (84 aa).

This sequence belongs to the bacterial ribosomal protein bS18 family. As to quaternary structure, part of the 30S ribosomal subunit. Forms a tight heterodimer with protein bS6.

Functionally, binds as a heterodimer with protein bS6 to the central domain of the 16S rRNA, where it helps stabilize the platform of the 30S subunit. This is Small ribosomal subunit protein bS18 from Mycobacterium leprae (strain Br4923).